Consider the following 383-residue polypeptide: Putative glutamate--cysteine ligase 2-1 (383 aa).

This sequence belongs to the glutamate--cysteine ligase type 2 family. YbdK subfamily.

It carries out the reaction L-cysteine + L-glutamate + ATP = gamma-L-glutamyl-L-cysteine + ADP + phosphate + H(+). Functionally, ATP-dependent carboxylate-amine ligase which exhibits weak glutamate--cysteine ligase activity. The protein is Putative glutamate--cysteine ligase 2-1 of Nocardia farcinica (strain IFM 10152).